The following is a 314-amino-acid chain: Solute carrier family 25 member 44 (314 aa).

Solcar repeat units follow at residues 18 to 100, 107 to 210, and 220 to 302; these read KKFY…TRKF, SNTV…YAEQ, and PHIV…LKKL. The next 6 helical transmembrane spans lie at 20–42, 71–90, 113–133, 185–201, 222–239, and 278–296; these read FYVF…TLIR, TGLY…GQCY, LVAG…IDVV, GYVA…AVWW, IVFQ…ASIL, and LSAR…VVGY.

This sequence belongs to the mitochondrial carrier (TC 2.A.29) family.

It is found in the mitochondrion membrane. The catalysed reaction is L-valine(in) = L-valine(out). It carries out the reaction L-leucine(in) = L-leucine(out). In terms of biological role, mitochondrial solute transporter which transports branched-chain amino acid (BCAA; valine, leucine and isoleucine) into mitochondria in brown adipose tissue (BAT). BAT is involved in BCAA catabolism and actively utilizes BCAA in the mitochondria for thermogenesis. This Pongo abelii (Sumatran orangutan) protein is Solute carrier family 25 member 44.